We begin with the raw amino-acid sequence, 1359 residues long: DNA-directed RNA polymerase subunit beta (1359 aa).

The protein belongs to the RNA polymerase beta chain family. The RNAP catalytic core consists of 2 alpha, 1 beta, 1 beta' and 1 omega subunit. When a sigma factor is associated with the core the holoenzyme is formed, which can initiate transcription.

The enzyme catalyses RNA(n) + a ribonucleoside 5'-triphosphate = RNA(n+1) + diphosphate. Functionally, DNA-dependent RNA polymerase catalyzes the transcription of DNA into RNA using the four ribonucleoside triphosphates as substrates. The sequence is that of DNA-directed RNA polymerase subunit beta from Nitrosomonas eutropha (strain DSM 101675 / C91 / Nm57).